A 375-amino-acid chain; its full sequence is uncharacterized protein (375 aa).

7 consecutive transmembrane segments (helical) span residues 21–41, 66–86, 160–180, 203–223, 234–254, 289–309, and 338–358; these read LLLL…IVLF, IIVF…FCVS, LVGV…PGIV, LVGL…HLLI, FYMV…FHLF, VISF…YFLI, and FFLM…MLFF.

Its subcellular location is the cell membrane. This is an uncharacterized protein from Mycoplasma genitalium (strain ATCC 33530 / DSM 19775 / NCTC 10195 / G37) (Mycoplasmoides genitalium).